The primary structure comprises 526 residues: Bifunctional purine biosynthesis protein PurH (526 aa).

The 147-residue stretch at 1–147 (MTKIERALIS…KNWAHVAIVT (147 aa)) folds into the MGS-like domain.

The protein belongs to the PurH family.

The catalysed reaction is (6R)-10-formyltetrahydrofolate + 5-amino-1-(5-phospho-beta-D-ribosyl)imidazole-4-carboxamide = 5-formamido-1-(5-phospho-D-ribosyl)imidazole-4-carboxamide + (6S)-5,6,7,8-tetrahydrofolate. The enzyme catalyses IMP + H2O = 5-formamido-1-(5-phospho-D-ribosyl)imidazole-4-carboxamide. It participates in purine metabolism; IMP biosynthesis via de novo pathway; 5-formamido-1-(5-phospho-D-ribosyl)imidazole-4-carboxamide from 5-amino-1-(5-phospho-D-ribosyl)imidazole-4-carboxamide (10-formyl THF route): step 1/1. The protein operates within purine metabolism; IMP biosynthesis via de novo pathway; IMP from 5-formamido-1-(5-phospho-D-ribosyl)imidazole-4-carboxamide: step 1/1. The protein is Bifunctional purine biosynthesis protein PurH of Laribacter hongkongensis (strain HLHK9).